We begin with the raw amino-acid sequence, 184 residues long: Protein GrpE (184 aa).

The segment covering 1–17 has biased composition (basic and acidic residues); sequence MQHEDKTPEQQENKTPE. The tract at residues 1–39 is disordered; the sequence is MQHEDKTPEQQENKTPETELQQENAPATPQEAGAAGSID. Positions 18 to 27 are enriched in polar residues; that stretch reads TELQQENAPA.

The protein belongs to the GrpE family. In terms of assembly, homodimer.

The protein resides in the cytoplasm. Participates actively in the response to hyperosmotic and heat shock by preventing the aggregation of stress-denatured proteins, in association with DnaK and GrpE. It is the nucleotide exchange factor for DnaK and may function as a thermosensor. Unfolded proteins bind initially to DnaJ; upon interaction with the DnaJ-bound protein, DnaK hydrolyzes its bound ATP, resulting in the formation of a stable complex. GrpE releases ADP from DnaK; ATP binding to DnaK triggers the release of the substrate protein, thus completing the reaction cycle. Several rounds of ATP-dependent interactions between DnaJ, DnaK and GrpE are required for fully efficient folding. The polypeptide is Protein GrpE (Methylobacillus flagellatus (strain ATCC 51484 / DSM 6875 / VKM B-1610 / KT)).